The following is a 465-amino-acid chain: Siroheme synthase (465 aa).

The precorrin-2 dehydrogenase /sirohydrochlorin ferrochelatase stretch occupies residues 1–203 (MEYLPLFHNL…GRTAEAERLL (203 aa)). NAD(+)-binding positions include 22-23 (EI) and 43-44 (PS). Ser128 bears the Phosphoserine mark. Positions 216–465 (GEVYLVGAGP…WFEGAQAAGR (250 aa)) are uroporphyrinogen-III C-methyltransferase. Residue Pro225 participates in S-adenosyl-L-methionine binding. The active-site Proton acceptor is the Asp248. Residue Lys270 is the Proton donor of the active site. Residues 301-303 (GGD), Ile306, 331-332 (TA), Met383, and Gly412 each bind S-adenosyl-L-methionine.

It in the N-terminal section; belongs to the precorrin-2 dehydrogenase / sirohydrochlorin ferrochelatase family. In the C-terminal section; belongs to the precorrin methyltransferase family.

It catalyses the reaction uroporphyrinogen III + 2 S-adenosyl-L-methionine = precorrin-2 + 2 S-adenosyl-L-homocysteine + H(+). The enzyme catalyses precorrin-2 + NAD(+) = sirohydrochlorin + NADH + 2 H(+). It carries out the reaction siroheme + 2 H(+) = sirohydrochlorin + Fe(2+). Its pathway is cofactor biosynthesis; adenosylcobalamin biosynthesis; precorrin-2 from uroporphyrinogen III: step 1/1. The protein operates within cofactor biosynthesis; adenosylcobalamin biosynthesis; sirohydrochlorin from precorrin-2: step 1/1. It functions in the pathway porphyrin-containing compound metabolism; siroheme biosynthesis; precorrin-2 from uroporphyrinogen III: step 1/1. It participates in porphyrin-containing compound metabolism; siroheme biosynthesis; siroheme from sirohydrochlorin: step 1/1. Its pathway is porphyrin-containing compound metabolism; siroheme biosynthesis; sirohydrochlorin from precorrin-2: step 1/1. In terms of biological role, multifunctional enzyme that catalyzes the SAM-dependent methylations of uroporphyrinogen III at position C-2 and C-7 to form precorrin-2 via precorrin-1. Then it catalyzes the NAD-dependent ring dehydrogenation of precorrin-2 to yield sirohydrochlorin. Finally, it catalyzes the ferrochelation of sirohydrochlorin to yield siroheme. The chain is Siroheme synthase from Stutzerimonas stutzeri (strain A1501) (Pseudomonas stutzeri).